A 505-amino-acid polypeptide reads, in one-letter code: Xylose import ATP-binding protein XylG (505 aa).

2 consecutive ABC transporter domains span residues L6–E243 and V262–K505. Residue G38–S45 coordinates ATP.

It belongs to the ABC transporter superfamily. Xylose importer (TC 3.A.1.2.4) family. In terms of assembly, the complex is composed of two ATP-binding proteins (XylG), two transmembrane proteins (XylH) and a solute-binding protein (XylF).

It is found in the cell membrane. The catalysed reaction is D-xylose(out) + ATP + H2O = D-xylose(in) + ADP + phosphate + H(+). Functionally, part of the ABC transporter complex XylFGH involved in xylose import. Responsible for energy coupling to the transport system. The chain is Xylose import ATP-binding protein XylG from Thermoanaerobacter pseudethanolicus (strain ATCC 33223 / 39E) (Clostridium thermohydrosulfuricum).